Reading from the N-terminus, the 285-residue chain is Acetyl-coenzyme A carboxylase carboxyl transferase subunit beta (285 aa).

In terms of domain architecture, CoA carboxyltransferase N-terminal spans 29 to 285 (IMTKCPKCKK…ILKIHQEVTK (257 aa)). Zn(2+) contacts are provided by C33, C36, C52, and C55. A C4-type zinc finger spans residues 33–55 (CPKCKKIMYTKELAENLNVCFNC).

The protein belongs to the AccD/PCCB family. Acetyl-CoA carboxylase is a heterohexamer composed of biotin carboxyl carrier protein (AccB), biotin carboxylase (AccC) and two subunits each of ACCase subunit alpha (AccA) and ACCase subunit beta (AccD). Zn(2+) is required as a cofactor.

Its subcellular location is the cytoplasm. It carries out the reaction N(6)-carboxybiotinyl-L-lysyl-[protein] + acetyl-CoA = N(6)-biotinyl-L-lysyl-[protein] + malonyl-CoA. It functions in the pathway lipid metabolism; malonyl-CoA biosynthesis; malonyl-CoA from acetyl-CoA: step 1/1. Functionally, component of the acetyl coenzyme A carboxylase (ACC) complex. Biotin carboxylase (BC) catalyzes the carboxylation of biotin on its carrier protein (BCCP) and then the CO(2) group is transferred by the transcarboxylase to acetyl-CoA to form malonyl-CoA. The polypeptide is Acetyl-coenzyme A carboxylase carboxyl transferase subunit beta (Staphylococcus aureus (strain Mu3 / ATCC 700698)).